The following is a 240-amino-acid chain: tRNA pseudouridine synthase A (240 aa).

The Nucleophile role is filled by Asp50. Tyr109 contacts substrate.

It belongs to the tRNA pseudouridine synthase TruA family. In terms of assembly, homodimer.

It carries out the reaction uridine(38/39/40) in tRNA = pseudouridine(38/39/40) in tRNA. Formation of pseudouridine at positions 38, 39 and 40 in the anticodon stem and loop of transfer RNAs. This chain is tRNA pseudouridine synthase A, found in Campylobacter jejuni (strain RM1221).